The following is a 463-amino-acid chain: Ribosomal protein uS12 methylthiotransferase RimO (463 aa).

The MTTase N-terminal domain maps to 15-130 (PKVGMVSLGC…VMQAVHSHLP (116 aa)). [4Fe-4S] cluster contacts are provided by Cys-24, Cys-60, Cys-89, Cys-161, Cys-165, and Cys-168. The Radical SAM core domain maps to 147 to 392 (LTPRHYAYLK…MEVAEEVSAA (246 aa)). Residues 395–463 (ARKIGKTLKV…ADGHDLWGEV (69 aa)) enclose the TRAM domain.

Belongs to the methylthiotransferase family. RimO subfamily. [4Fe-4S] cluster serves as cofactor.

The protein localises to the cytoplasm. The enzyme catalyses L-aspartate(89)-[ribosomal protein uS12]-hydrogen + (sulfur carrier)-SH + AH2 + 2 S-adenosyl-L-methionine = 3-methylsulfanyl-L-aspartate(89)-[ribosomal protein uS12]-hydrogen + (sulfur carrier)-H + 5'-deoxyadenosine + L-methionine + A + S-adenosyl-L-homocysteine + 2 H(+). Functionally, catalyzes the methylthiolation of an aspartic acid residue of ribosomal protein uS12. This chain is Ribosomal protein uS12 methylthiotransferase RimO, found in Burkholderia mallei (strain NCTC 10229).